Consider the following 221-residue polypeptide: Spore wall protein 3 (221 aa).

An N-terminal signal peptide occupies residues 1–20 (MVRRSLYFLAVMGVVRSSSG). Residues 150–203 (ENPASTGSSSTSTCPPKGTAGTTDNKGKAGGAAADDKSKSSSSSSSKKKKKGAK) form a disordered region. Residues 154 to 173 (STGSSSTSTCPPKGTAGTTD) are compositionally biased toward low complexity. Ser192 carries the GPI-anchor amidated serine lipid modification. A propeptide spans 193-221 (SSSKKKKKGAKSLVALGAVATTALFSIVM) (removed in mature form).

The protein localises to the spore wall. Its subcellular location is the membrane. The protein resides in the cytoplasm. Its function is as follows. Spore wall component. The protein is Spore wall protein 3 (SWP3) of Encephalitozoon cuniculi (strain GB-M1) (Microsporidian parasite).